A 427-amino-acid polypeptide reads, in one-letter code: Adenylosuccinate synthetase (427 aa).

GTP is bound by residues 12–18 (GDEGKGK) and 40–42 (GHT). Asp13 acts as the Proton acceptor in catalysis. 2 residues coordinate Mg(2+): Asp13 and Gly40. Residues 13 to 16 (DEGK), 38 to 41 (NAGH), Thr127, Arg141, Gln222, Thr237, and Arg301 contribute to the IMP site. Residue His41 is the Proton donor of the active site. 297–303 (VVTKRPR) provides a ligand contact to substrate. Residues Arg303, 329 to 331 (SLD), and 411 to 413 (AVG) contribute to the GTP site.

It belongs to the adenylosuccinate synthetase family. In terms of assembly, homodimer. It depends on Mg(2+) as a cofactor.

The protein localises to the cytoplasm. It carries out the reaction IMP + L-aspartate + GTP = N(6)-(1,2-dicarboxyethyl)-AMP + GDP + phosphate + 2 H(+). Its pathway is purine metabolism; AMP biosynthesis via de novo pathway; AMP from IMP: step 1/2. Plays an important role in the de novo pathway of purine nucleotide biosynthesis. Catalyzes the first committed step in the biosynthesis of AMP from IMP. This Leuconostoc mesenteroides subsp. mesenteroides (strain ATCC 8293 / DSM 20343 / BCRC 11652 / CCM 1803 / JCM 6124 / NCDO 523 / NBRC 100496 / NCIMB 8023 / NCTC 12954 / NRRL B-1118 / 37Y) protein is Adenylosuccinate synthetase.